Reading from the N-terminus, the 418-residue chain is Protein MAEA homolog (418 aa).

A LisH domain is found at asparagine 141–aspartate 173. The CTLH domain occupies isoleucine 179–serine 236. The segment at cysteine 330–threonine 403 adopts an RING-Gid-type zinc-finger fold.

Interacts with RANBPM.

Its subcellular location is the cytoplasm. This chain is Protein MAEA homolog, found in Arabidopsis thaliana (Mouse-ear cress).